A 33-amino-acid polypeptide reads, in one-letter code: Antimicrobial peptide MBP-1 (33 aa).

In terms of tissue distribution, predominantly in the embryo portion of the kernel.

It localises to the secreted. Its function is as follows. Inhibitor of both bacterial and fungal growth in vitro. The polypeptide is Antimicrobial peptide MBP-1 (Zea mays (Maize)).